We begin with the raw amino-acid sequence, 143 residues long: Phosphoprotein 32 (143 aa).

Positions 1 to 14 (MESSNINALQQPSS) are enriched in polar residues. Residues 1–32 (MESSNINALQQPSSIAHHPSKQCASSLNETVK) form a disordered region.

It belongs to the varicellovirus ORF32 protein family. In terms of processing, phosphorylated by ORF47 protein.

The sequence is that of Phosphoprotein 32 from Homo sapiens (Human).